The primary structure comprises 466 residues: Cell division protein FtsP (466 aa).

Positions methionine 1 to alanine 28 form a signal peptide, tat-type signal.

Belongs to the FtsP family. In terms of processing, predicted to be exported by the Tat system. The position of the signal peptide cleavage has not been experimentally proven.

The protein localises to the periplasm. In terms of biological role, cell division protein that is required for growth during stress conditions. May be involved in protecting or stabilizing the divisomal assembly under conditions of stress. The polypeptide is Cell division protein FtsP (Gallibacterium anatis (strain UMN179) (Pasteurella anatis)).